We begin with the raw amino-acid sequence, 470 residues long: Aminoacyl transferase sphA (470 aa).

The pyridoxal 5'-phosphate site is built by serine 212, histidine 244, and threonine 272. Position 275 is an N6-(pyridoxal phosphate)lysine (lysine 275).

Belongs to the class-II pyridoxal-phosphate-dependent aminotransferase family. BioF subfamily. Homodimer. Pyridoxal 5'-phosphate is required as a cofactor.

It participates in secondary metabolite biosynthesis. In terms of biological role, aminoacyl transferase; part of the gene cluster that mediates the biosynthesis of sphingofungins, bioactive molecules acting as sphingolipid inhibitors via inhibiting serine palmitoyl transferase (SPT). Within the pathway, sphA transfers 2-methyl-aminomalonate and 2-hydroxymethyl-aminomalonate onto the sphB product 3-hydroxyoctadeca-4,10-dienoyl-ACP to produce the precursors of sphingofungins E and F. The substrate specificity of sphA using 2-methyl-aminomalonate and 2-hydroxymethyl-aminomalonate instread of aminomalonate is responsible for the biosynthesis of sphingofungins E and F but not B and C like in Aspergillus fumigatus. The PKS sphB does not contain any putative thioesterase domain for releasing the nascent polyketide chain and it has been suggested that aminoacyl transferases can facilitate the polyketide chain release. The polypeptide is Aminoacyl transferase sphA (Byssochlamys spectabilis (Paecilomyces variotii)).